The chain runs to 122 residues: Large ribosomal subunit protein uL14 (122 aa).

Belongs to the universal ribosomal protein uL14 family. As to quaternary structure, part of the 50S ribosomal subunit. Forms a cluster with proteins L3 and L19. In the 70S ribosome, L14 and L19 interact and together make contacts with the 16S rRNA in bridges B5 and B8.

In terms of biological role, binds to 23S rRNA. Forms part of two intersubunit bridges in the 70S ribosome. The chain is Large ribosomal subunit protein uL14 from Chlamydia caviae (strain ATCC VR-813 / DSM 19441 / 03DC25 / GPIC) (Chlamydophila caviae).